Consider the following 36-residue polypeptide: Mu-agatoxin-Aa1a (36 aa).

Cystine bridges form between C2/C17, C9/C22, C16/C32, and C24/C30. N36 carries the asparagine amide modification.

Belongs to the neurotoxin 07 (Beta/delta-agtx) family. 04 (aga-5) subfamily. As to expression, expressed by the venom gland.

It localises to the secreted. Functionally, insecticidal neurotoxin that induces an irreversible spastic paralysis when injected into insects. Modifies presynaptic voltage-gated sodium channels (Nav), causing them to open at the normal resting potential of the nerve. This leads to spontaneous release of neurotransmitter and repetitive action potentials in motor neurons. The sequence is that of Mu-agatoxin-Aa1a from Agelenopsis aperta (North American funnel-web spider).